The following is a 133-amino-acid chain: Small ribosomal subunit protein uS8 (133 aa).

It belongs to the universal ribosomal protein uS8 family. As to quaternary structure, part of the 30S ribosomal subunit. Contacts proteins S5 and S12.

In terms of biological role, one of the primary rRNA binding proteins, it binds directly to 16S rRNA central domain where it helps coordinate assembly of the platform of the 30S subunit. The chain is Small ribosomal subunit protein uS8 from Prochlorococcus marinus subsp. pastoris (strain CCMP1986 / NIES-2087 / MED4).